The primary structure comprises 136 residues: Histone H3.3 (136 aa).

Positions 1 to 42 are disordered; the sequence is MARTKQTARKSTGGKAPRKQLASKAARKSAPVSGGVKKPHRY. Lys-5 carries the N6,N6,N6-trimethyllysine; alternate modification. Lys-5 is subject to N6,N6-dimethyllysine; alternate. N6-methyllysine; alternate occurs at positions 5 and 10. At Lys-10 the chain carries N6-acetyllysine; alternate. Phosphoserine is present on Ser-11. At Lys-15 the chain carries N6,N6-dimethyllysine; alternate. 5 positions are modified to N6-acetyllysine; alternate: Lys-15, Lys-19, Lys-24, Lys-28, and Lys-37. 4 positions are modified to N6-methyllysine; alternate: Lys-19, Lys-24, Lys-28, and Lys-37. N6,N6,N6-trimethyllysine; alternate occurs at positions 28 and 37. Lys-28 and Lys-37 each carry N6,N6-dimethyllysine; alternate. Lys-57 and Lys-65 each carry N6-acetyllysine. N6,N6,N6-trimethyllysine; alternate is present on Lys-80. Residue Lys-80 is modified to N6,N6-dimethyllysine; alternate. N6-methyllysine; alternate is present on Lys-80.

The protein belongs to the histone H3 family. The nucleosome is a histone octamer containing two molecules each of H2A, H2B, H3 and H4 assembled in one H3-H4 heterotetramer and two H2A-H2B heterodimers. The octamer wraps approximately 147 bp of DNA. In terms of processing, phosphorylated by IPL1 to form H3S10ph. H3S10ph promotes subsequent H3K14ac formation and is required for transcriptional activation through TBP recruitment to the promoters. Mono-, di- and trimethylated by the COMPASS complex to form H3K4me1/2/3. H3K4me activates gene expression by regulating transcription elongation and plays a role in telomere length maintenance. H3K4me enrichment correlates with transcription levels, and occurs in a 5' to 3' gradient with H3K4me3 enrichment at the 5'-end of genes, shifting to H3K4me2 and then H3K4me1. Methylated by SET2 to form H3K36me. H3K36me represses gene expression. Methylated by DOT1 to form H3K79me. H3K79me is required for association of SIR proteins with telomeric regions and for telomeric silencing. The COMPASS-mediated formation of H3K4me2/3 and the DOT1-mediated formation of H3K79me require H2BK123ub1. Post-translationally, acetylation of histone H3 leads to transcriptional activation. H3K14ac formation by GCN5 is promoted by H3S10ph. H3K14ac can also be formed by ESA1. H3K56ac formation occurs predominantly in newly synthesized H3 molecules during G1, S and G2/M of the cell cycle and may be involved in DNA repair.

It is found in the nucleus. The protein resides in the chromosome. Functionally, core component of nucleosome. Nucleosomes wrap and compact DNA into chromatin, limiting DNA accessibility to the cellular machineries which require DNA as a template. Histones thereby play a central role in transcription regulation, DNA repair, DNA replication and chromosomal stability. DNA accessibility is regulated via a complex set of post-translational modifications of histones, also called histone code, and nucleosome remodeling. The protein is Histone H3.3 (HHT3) of Candida albicans (strain SC5314 / ATCC MYA-2876) (Yeast).